Here is a 609-residue protein sequence, read N- to C-terminus: Protein NRT1/ PTR FAMILY 7.1 (609 aa).

A run of 2 helical transmembrane segments spans residues 67-87 (IILL…GVNL) and 109-129 (WTGT…SYWG). A Phosphothreonine modification is found at threonine 133. 10 consecutive transmembrane segments (helical) span residues 136 to 156 (IFQV…WFFL), 173 to 193 (SSLG…GYGG), 216 to 236 (FFSY…TILV), 243 to 263 (LWTE…VAFL), 367 to 387 (PIWL…SLFV), 402 to 422 (IPAA…TGIY), 438 to 458 (MGIG…TEIQ), 474 to 494 (ILWQ…MYVG), 516 to 536 (MASM…VMAI), and 559 to 579 (FYFL…IFAK).

Belongs to the major facilitator superfamily. Proton-dependent oligopeptide transporter (POT/PTR) (TC 2.A.17) family. Expressed in flowers.

Its subcellular location is the membrane. The polypeptide is Protein NRT1/ PTR FAMILY 7.1 (NPF7.1) (Arabidopsis thaliana (Mouse-ear cress)).